The chain runs to 72 residues: Translation initiation factor IF-1 (72 aa).

An S1-like domain is found at 1 to 72 (MAKADVIEVE…TKGRITFRFK (72 aa)).

This sequence belongs to the IF-1 family. In terms of assembly, component of the 30S ribosomal translation pre-initiation complex which assembles on the 30S ribosome in the order IF-2 and IF-3, IF-1 and N-formylmethionyl-tRNA(fMet); mRNA recruitment can occur at any time during PIC assembly.

Its subcellular location is the cytoplasm. Its function is as follows. One of the essential components for the initiation of protein synthesis. Stabilizes the binding of IF-2 and IF-3 on the 30S subunit to which N-formylmethionyl-tRNA(fMet) subsequently binds. Helps modulate mRNA selection, yielding the 30S pre-initiation complex (PIC). Upon addition of the 50S ribosomal subunit IF-1, IF-2 and IF-3 are released leaving the mature 70S translation initiation complex. The polypeptide is Translation initiation factor IF-1 (Limosilactobacillus reuteri (strain DSM 20016) (Lactobacillus reuteri)).